Reading from the N-terminus, the 599-residue chain is Afamin (599 aa).

A signal peptide spans 1-21 (MKLLKLTGFIFFLFFLTESLT). 3 Albumin domains span residues 22–210 (LPTQ…IPVT), 211–403 (QYLK…KFNE), and 404–599 (TTEK…KIGN). A glycan (N-linked (GlcNAc...) (complex) asparagine) is linked at Asn33. 11 disulfide bridges follow: Cys77–Cys86, Cys99–Cys114, Cys113–Cys124, Cys148–Cys193, Cys192–Cys201, Cys224–Cys270, Cys269–Cys277, Cys289–Cys303, Cys302–Cys313, Cys340–Cys385, and Cys384–Cys393. The N-linked (GlcNAc...) (complex) asparagine glycan is linked to Asn109. Positions 215-319 (AFSSYQKHVC…RGQCIINSNK (105 aa)) are binding pocket for hydrophobic ligands. The N-linked (GlcNAc...) (complex) asparagine; atypical glycan is linked to Asn383. Asn402 is a glycosylation site (N-linked (GlcNAc...) (complex) asparagine). 6 cysteine pairs are disulfide-bonded: Cys416-Cys462, Cys461-Cys470, Cys483-Cys499, Cys498-Cys509, Cys536-Cys581, and Cys580-Cys589. Residue Asn488 is glycosylated (N-linked (GlcNAc...) asparagine).

It belongs to the ALB/AFP/VDB family. As to quaternary structure, forms a 1:1 complex with Wnt family members; interacts with WNT1, WNT2B, WNT3, WNT3A, WNT5A, WNT7A, WNT7B, WNT8, WNT9A, WNT9B, WNT10A and WNT10B. Post-translationally, N-glycosylated; more than 90% of the glycans are sialylated. High level detected in plasma but also in extravascular fluids such as follicular and cerebrospinal fluids (at protein level).

The protein resides in the secreted. In terms of biological role, functions as a carrier for hydrophobic molecules in body fluids. Essential for the solubility and activity of lipidated Wnt family members, including WNT1, WNT2B, WNT3, WNT3A, WNT5A, WNT7A, WNT7B, WNT8, WNT9A, WNT9B, WNT10A and WNT10B. Binds vitamin E. May transport vitamin E in body fluids under conditions where the lipoprotein system is not sufficient. May be involved in the transport of vitamin E across the blood-brain barrier. This is Afamin (AFM) from Homo sapiens (Human).